A 237-amino-acid chain; its full sequence is Ditrans,polycis-undecaprenyl-diphosphate synthase ((2E,6E)-farnesyl-diphosphate specific) (237 aa).

D11 is an active-site residue. D11 provides a ligand contact to Mg(2+). Residues 12-15 (GNGR), W16, R24, H28, and 56-58 (SIE) each bind substrate. N59 (proton acceptor) is an active-site residue. Residues R62, R179, and 185 to 187 (RLS) each bind substrate. E198 contributes to the Mg(2+) binding site.

The protein belongs to the UPP synthase family. In terms of assembly, homodimer. Requires Mg(2+) as cofactor.

The catalysed reaction is 8 isopentenyl diphosphate + (2E,6E)-farnesyl diphosphate = di-trans,octa-cis-undecaprenyl diphosphate + 8 diphosphate. Its function is as follows. Catalyzes the sequential condensation of isopentenyl diphosphate (IPP) with (2E,6E)-farnesyl diphosphate (E,E-FPP) to yield (2Z,6Z,10Z,14Z,18Z,22Z,26Z,30Z,34E,38E)-undecaprenyl diphosphate (di-trans,octa-cis-UPP). UPP is the precursor of glycosyl carrier lipid in the biosynthesis of bacterial cell wall polysaccharide components such as peptidoglycan and lipopolysaccharide. The chain is Ditrans,polycis-undecaprenyl-diphosphate synthase ((2E,6E)-farnesyl-diphosphate specific) from Coxiella burnetii (strain RSA 493 / Nine Mile phase I).